An 88-amino-acid polypeptide reads, in one-letter code: Large ribosomal subunit protein bL31 (88 aa).

The interval Met67–Ser88 is disordered. The span at Thr74–Ser88 shows a compositional bias: basic and acidic residues.

This sequence belongs to the bacterial ribosomal protein bL31 family. Type A subfamily. In terms of assembly, part of the 50S ribosomal subunit.

Functionally, binds the 23S rRNA. This Synechococcus sp. (strain CC9311) protein is Large ribosomal subunit protein bL31.